The chain runs to 502 residues: Maturase K (502 aa).

Belongs to the intron maturase 2 family. MatK subfamily.

The protein localises to the plastid. The protein resides in the chloroplast. Functionally, usually encoded in the trnK tRNA gene intron. Probably assists in splicing its own and other chloroplast group II introns. The chain is Maturase K from Theobroma cacao (Cacao).